The sequence spans 236 residues: OPEP-2 protein (236 aa).

This Orgyia pseudotsugata (Douglas-fir tussock moth) protein is OPEP-2 protein (OPEP-2).